We begin with the raw amino-acid sequence, 1250 residues long: DNA-directed RNA polymerase subunit beta (1250 aa).

Residues 1139 to 1226 form a disordered region; sequence GGAELAKPAP…DLFDEGDEDL (88 aa). Acidic residues-rich tracts occupy residues 1155-1183 and 1207-1226; these read ESGE…DPEE and ADDD…DEDL.

Belongs to the RNA polymerase beta chain family. In terms of assembly, the RNAP catalytic core consists of 2 alpha, 1 beta, 1 beta' and 1 omega subunit. When a sigma factor is associated with the core the holoenzyme is formed, which can initiate transcription.

It carries out the reaction RNA(n) + a ribonucleoside 5'-triphosphate = RNA(n+1) + diphosphate. Functionally, DNA-dependent RNA polymerase catalyzes the transcription of DNA into RNA using the four ribonucleoside triphosphates as substrates. This is DNA-directed RNA polymerase subunit beta from Symbiobacterium thermophilum (strain DSM 24528 / JCM 14929 / IAM 14863 / T).